The chain runs to 119 residues: Ribonuclease P protein component (119 aa).

The protein belongs to the RnpA family. As to quaternary structure, consists of a catalytic RNA component (M1 or rnpB) and a protein subunit.

It catalyses the reaction Endonucleolytic cleavage of RNA, removing 5'-extranucleotides from tRNA precursor.. In terms of biological role, RNaseP catalyzes the removal of the 5'-leader sequence from pre-tRNA to produce the mature 5'-terminus. It can also cleave other RNA substrates such as 4.5S RNA. The protein component plays an auxiliary but essential role in vivo by binding to the 5'-leader sequence and broadening the substrate specificity of the ribozyme. This Borreliella burgdorferi (strain ZS7) (Borrelia burgdorferi) protein is Ribonuclease P protein component.